Reading from the N-terminus, the 195-residue chain is MRLVLLGPPGAGKGTQAQRLVARHGIVQLSTGDMLRAAVAAGTPVGLKAKAVMDAGGLVSDEIVIGIIAERLDSPDAKNGFILDGFPRTVAQAEALDQLLASKGLKLDAVIELVVDQEKLVNRILNRAAEAQAKGEAVRKDDDPVVFKTRLEAYNRDTAVVAPYYKARGQLKQIDGMAPIDQVTAAIDGVLAEAA.

10–15 serves as a coordination point for ATP; the sequence is GAGKGT. Residues 30–59 are NMP; it reads STGDMLRAAVAAGTPVGLKAKAVMDAGGLV. AMP-binding positions include Thr-31, Arg-36, 57 to 59, 85 to 88, and Gln-92; these read GLV and GFPR. An LID region spans residues 126–143; it reads NRAAEAQAKGEAVRKDDD. Arg-127 provides a ligand contact to ATP. Arg-150 lines the AMP pocket. ATP is bound at residue Ala-178.

This sequence belongs to the adenylate kinase family. In terms of assembly, monomer.

Its subcellular location is the cytoplasm. It carries out the reaction AMP + ATP = 2 ADP. It participates in purine metabolism; AMP biosynthesis via salvage pathway; AMP from ADP: step 1/1. In terms of biological role, catalyzes the reversible transfer of the terminal phosphate group between ATP and AMP. Plays an important role in cellular energy homeostasis and in adenine nucleotide metabolism. This is Adenylate kinase from Xanthobacter autotrophicus (strain ATCC BAA-1158 / Py2).